Reading from the N-terminus, the 270-residue chain is Formamidopyrimidine-DNA glycosylase (270 aa).

Catalysis depends on Pro2, which acts as the Schiff-base intermediate with DNA. Glu3 acts as the Proton donor in catalysis. The Proton donor; for beta-elimination activity role is filled by Lys57. DNA contacts are provided by His90, Arg109, and Arg151. An FPG-type zinc finger spans residues 236–270 (QVYGRGGKLCMVCSNRLKEVRLGQRSTVYCTQCQR). The Proton donor; for delta-elimination activity role is filled by Arg260.

This sequence belongs to the FPG family. Monomer. Zn(2+) serves as cofactor.

It carries out the reaction Hydrolysis of DNA containing ring-opened 7-methylguanine residues, releasing 2,6-diamino-4-hydroxy-5-(N-methyl)formamidopyrimidine.. The catalysed reaction is 2'-deoxyribonucleotide-(2'-deoxyribose 5'-phosphate)-2'-deoxyribonucleotide-DNA = a 3'-end 2'-deoxyribonucleotide-(2,3-dehydro-2,3-deoxyribose 5'-phosphate)-DNA + a 5'-end 5'-phospho-2'-deoxyribonucleoside-DNA + H(+). Functionally, involved in base excision repair of DNA damaged by oxidation or by mutagenic agents. Acts as a DNA glycosylase that recognizes and removes damaged bases. Has a preference for oxidized purines, such as 7,8-dihydro-8-oxoguanine (8-oxoG). Has AP (apurinic/apyrimidinic) lyase activity and introduces nicks in the DNA strand. Cleaves the DNA backbone by beta-delta elimination to generate a single-strand break at the site of the removed base with both 3'- and 5'-phosphates. The protein is Formamidopyrimidine-DNA glycosylase of Idiomarina loihiensis (strain ATCC BAA-735 / DSM 15497 / L2-TR).